The primary structure comprises 504 residues: ATP synthase subunit alpha, chloroplastic (504 aa).

170–177 is an ATP binding site; it reads GDRQTGKT.

This sequence belongs to the ATPase alpha/beta chains family. As to quaternary structure, F-type ATPases have 2 components, CF(1) - the catalytic core - and CF(0) - the membrane proton channel. CF(1) has five subunits: alpha(3), beta(3), gamma(1), delta(1), epsilon(1). CF(0) has four main subunits: a, b, b' and c.

It localises to the plastid. The protein resides in the chloroplast thylakoid membrane. The enzyme catalyses ATP + H2O + 4 H(+)(in) = ADP + phosphate + 5 H(+)(out). Functionally, produces ATP from ADP in the presence of a proton gradient across the membrane. The alpha chain is a regulatory subunit. This Jasminum nudiflorum (Winter jasmine) protein is ATP synthase subunit alpha, chloroplastic.